The chain runs to 104 residues: Iron-sulfur cluster assembly protein CyaY (104 aa).

The protein belongs to the frataxin family.

Its function is as follows. Involved in iron-sulfur (Fe-S) cluster assembly. May act as a regulator of Fe-S biogenesis. In Tolumonas auensis (strain DSM 9187 / NBRC 110442 / TA 4), this protein is Iron-sulfur cluster assembly protein CyaY.